A 185-amino-acid chain; its full sequence is Ribosome-recycling factor (185 aa).

This sequence belongs to the RRF family.

Its subcellular location is the cytoplasm. In terms of biological role, responsible for the release of ribosomes from messenger RNA at the termination of protein biosynthesis. May increase the efficiency of translation by recycling ribosomes from one round of translation to another. This Desulfosudis oleivorans (strain DSM 6200 / JCM 39069 / Hxd3) (Desulfococcus oleovorans) protein is Ribosome-recycling factor.